The primary structure comprises 387 residues: Protein WHAT'S THIS FACTOR 9, mitochondrial (387 aa).

A mitochondrion-targeting transit peptide spans 1-24; that stretch reads MLSIRRHAKTVASSCTNLTQKRTY. The PORR domain maps to 32-358; it reads KRDPYFDNIE…KKYIQLMKNS (327 aa).

It is found in the mitochondrion. In terms of biological role, RNA-binding protein involved in group II intron splicing. Binds specific group II introns and promotes their splicing (e.g. rpl2 and ccmFC). The protein is Protein WHAT'S THIS FACTOR 9, mitochondrial of Arabidopsis thaliana (Mouse-ear cress).